A 261-amino-acid polypeptide reads, in one-letter code: Pantothenate synthetase (261 aa).

29 to 36 contributes to the ATP binding site; the sequence is MGALHNGH. His36 (proton donor) is an active-site residue. Gln60 is a binding site for (R)-pantoate. Gln60 is a beta-alanine binding site. 147–150 contributes to the ATP binding site; the sequence is GEKD. A (R)-pantoate-binding site is contributed by Gln153. 184-187 provides a ligand contact to ATP; the sequence is LSSR.

This sequence belongs to the pantothenate synthetase family. In terms of assembly, homodimer.

The protein localises to the cytoplasm. The catalysed reaction is (R)-pantoate + beta-alanine + ATP = (R)-pantothenate + AMP + diphosphate + H(+). It functions in the pathway cofactor biosynthesis; (R)-pantothenate biosynthesis; (R)-pantothenate from (R)-pantoate and beta-alanine: step 1/1. Catalyzes the condensation of pantoate with beta-alanine in an ATP-dependent reaction via a pantoyl-adenylate intermediate. In Francisella tularensis subsp. tularensis (strain FSC 198), this protein is Pantothenate synthetase.